The sequence spans 171 residues: 3-hydroxydecanoyl-[acyl-carrier-protein] dehydratase (171 aa).

H70 is a catalytic residue.

This sequence belongs to the thioester dehydratase family. FabA subfamily. As to quaternary structure, homodimer.

The protein localises to the cytoplasm. The catalysed reaction is a (3R)-hydroxyacyl-[ACP] = a (2E)-enoyl-[ACP] + H2O. The enzyme catalyses (3R)-hydroxydecanoyl-[ACP] = (2E)-decenoyl-[ACP] + H2O. It carries out the reaction (2E)-decenoyl-[ACP] = (3Z)-decenoyl-[ACP]. Its pathway is lipid metabolism; fatty acid biosynthesis. In terms of biological role, necessary for the introduction of cis unsaturation into fatty acids. Catalyzes the dehydration of (3R)-3-hydroxydecanoyl-ACP to E-(2)-decenoyl-ACP and then its isomerization to Z-(3)-decenoyl-ACP. Can catalyze the dehydratase reaction for beta-hydroxyacyl-ACPs with saturated chain lengths up to 16:0, being most active on intermediate chain length. The sequence is that of 3-hydroxydecanoyl-[acyl-carrier-protein] dehydratase from Shewanella oneidensis (strain ATCC 700550 / JCM 31522 / CIP 106686 / LMG 19005 / NCIMB 14063 / MR-1).